Consider the following 378-residue polypeptide: Queuine tRNA-ribosyltransferase (378 aa).

Catalysis depends on Asp-92, which acts as the Proton acceptor. Substrate contacts are provided by residues 92 to 96, Asp-146, Gln-188, and Gly-215; that span reads DSGGF. Positions 246–252 are RNA binding; it reads GVGTHLE. The active-site Nucleophile is the Asp-265. The segment at 270–274 is RNA binding; important for wobble base 34 recognition; it reads TRLAR. The Zn(2+) site is built by Cys-303, Cys-305, Cys-308, and His-334.

Belongs to the queuine tRNA-ribosyltransferase family. As to quaternary structure, homodimer. Within each dimer, one monomer is responsible for RNA recognition and catalysis, while the other monomer binds to the replacement base PreQ1. It depends on Zn(2+) as a cofactor.

It carries out the reaction 7-aminomethyl-7-carbaguanine + guanosine(34) in tRNA = 7-aminomethyl-7-carbaguanosine(34) in tRNA + guanine. The protein operates within tRNA modification; tRNA-queuosine biosynthesis. Catalyzes the base-exchange of a guanine (G) residue with the queuine precursor 7-aminomethyl-7-deazaguanine (PreQ1) at position 34 (anticodon wobble position) in tRNAs with GU(N) anticodons (tRNA-Asp, -Asn, -His and -Tyr). Catalysis occurs through a double-displacement mechanism. The nucleophile active site attacks the C1' of nucleotide 34 to detach the guanine base from the RNA, forming a covalent enzyme-RNA intermediate. The proton acceptor active site deprotonates the incoming PreQ1, allowing a nucleophilic attack on the C1' of the ribose to form the product. After dissociation, two additional enzymatic reactions on the tRNA convert PreQ1 to queuine (Q), resulting in the hypermodified nucleoside queuosine (7-(((4,5-cis-dihydroxy-2-cyclopenten-1-yl)amino)methyl)-7-deazaguanosine). This chain is Queuine tRNA-ribosyltransferase, found in Thermosynechococcus vestitus (strain NIES-2133 / IAM M-273 / BP-1).